A 136-amino-acid chain; its full sequence is uncharacterized protein (136 aa).

The chain crosses the membrane as a helical span at residues 102–118; the sequence is FVIVFFFFSFSLSISCV.

Its subcellular location is the membrane. This is an uncharacterized protein from Saccharomyces cerevisiae (strain ATCC 204508 / S288c) (Baker's yeast).